The sequence spans 692 residues: Elongation factor G (692 aa).

The tr-type G domain maps to 8 to 283 (EMTRNIGIMA…AVLDYMPAPT (276 aa)). Residues 17–24 (AHIDAGKT), 81–85 (DTPGH), and 135–138 (NKMD) each bind GTP.

This sequence belongs to the TRAFAC class translation factor GTPase superfamily. Classic translation factor GTPase family. EF-G/EF-2 subfamily.

It localises to the cytoplasm. Functionally, catalyzes the GTP-dependent ribosomal translocation step during translation elongation. During this step, the ribosome changes from the pre-translocational (PRE) to the post-translocational (POST) state as the newly formed A-site-bound peptidyl-tRNA and P-site-bound deacylated tRNA move to the P and E sites, respectively. Catalyzes the coordinated movement of the two tRNA molecules, the mRNA and conformational changes in the ribosome. This is Elongation factor G from Citrifermentans bemidjiense (strain ATCC BAA-1014 / DSM 16622 / JCM 12645 / Bem) (Geobacter bemidjiensis).